The chain runs to 415 residues: Ubp4-interactor sfp47 (415 aa).

Residues serine 221 and serine 226 each carry the phosphoserine modification. Phosphothreonine is present on threonine 231. Serine 235 is modified (phosphoserine). The SH3 domain maps to 352–415; the sequence is PIFAYVRALY…PSNYIEELEY (64 aa).

As to quaternary structure, interacts with ubp4.

It is found in the cytoplasm. Its subcellular location is the endosome. Functionally, required for the regulation of activity and recruitment of ubp4 to endosomes. This Schizosaccharomyces pombe (strain 972 / ATCC 24843) (Fission yeast) protein is Ubp4-interactor sfp47 (sfp47).